We begin with the raw amino-acid sequence, 149 residues long: Arginine repressor (149 aa).

The protein belongs to the ArgR family.

The protein localises to the cytoplasm. The protein operates within amino-acid biosynthesis; L-arginine biosynthesis [regulation]. Functionally, regulates arginine biosynthesis genes. This Geobacillus thermodenitrificans (strain NG80-2) protein is Arginine repressor.